A 350-amino-acid chain; its full sequence is Histidinol-phosphate aminotransferase (350 aa).

Lysine 220 is modified (N6-(pyridoxal phosphate)lysine).

It belongs to the class-II pyridoxal-phosphate-dependent aminotransferase family. Histidinol-phosphate aminotransferase subfamily. As to quaternary structure, homodimer. Pyridoxal 5'-phosphate is required as a cofactor.

The catalysed reaction is L-histidinol phosphate + 2-oxoglutarate = 3-(imidazol-4-yl)-2-oxopropyl phosphate + L-glutamate. The protein operates within amino-acid biosynthesis; L-histidine biosynthesis; L-histidine from 5-phospho-alpha-D-ribose 1-diphosphate: step 7/9. This Macrococcus caseolyticus (strain JCSC5402) (Macrococcoides caseolyticum) protein is Histidinol-phosphate aminotransferase.